The primary structure comprises 266 residues: Small ribosomal subunit protein uS2 (266 aa).

The interval 227–266 (GVSFTEETPSEPIQSDSSEEEEGSLDISDLFEDTDLKEEE) is disordered. Over residues 231–240 (TEETPSEPIQ) the composition is skewed to polar residues. Residues 243 to 266 (SSEEEEGSLDISDLFEDTDLKEEE) show a composition bias toward acidic residues.

This sequence belongs to the universal ribosomal protein uS2 family.

This is Small ribosomal subunit protein uS2 from Pseudothermotoga lettingae (strain ATCC BAA-301 / DSM 14385 / NBRC 107922 / TMO) (Thermotoga lettingae).